A 546-amino-acid polypeptide reads, in one-letter code: Probable protein kinase UbiB (546 aa).

The Protein kinase domain occupies D124–L502. ATP contacts are provided by residues L130 to V138 and K153. D288 functions as the Proton acceptor in the catalytic mechanism. The next 2 membrane-spanning stretches (helical) occupy residues Y501–P521 and E522–W542.

The protein belongs to the ABC1 family. UbiB subfamily.

The protein localises to the cell inner membrane. Its pathway is cofactor biosynthesis; ubiquinone biosynthesis [regulation]. Its function is as follows. Is probably a protein kinase regulator of UbiI activity which is involved in aerobic coenzyme Q (ubiquinone) biosynthesis. This chain is Probable protein kinase UbiB, found in Klebsiella pneumoniae subsp. pneumoniae (strain ATCC 700721 / MGH 78578).